The primary structure comprises 406 residues: 4-hydroxy-3-methylbut-2-en-1-yl diphosphate synthase (flavodoxin) (406 aa).

Positions 297, 300, 343, and 350 each coordinate [4Fe-4S] cluster.

This sequence belongs to the IspG family. Homodimer. The cofactor is [4Fe-4S] cluster.

The enzyme catalyses (2E)-4-hydroxy-3-methylbut-2-enyl diphosphate + oxidized [flavodoxin] + H2O + 2 H(+) = 2-C-methyl-D-erythritol 2,4-cyclic diphosphate + reduced [flavodoxin]. Its pathway is isoprenoid biosynthesis; isopentenyl diphosphate biosynthesis via DXP pathway; isopentenyl diphosphate from 1-deoxy-D-xylulose 5-phosphate: step 5/6. In terms of biological role, converts 2C-methyl-D-erythritol 2,4-cyclodiphosphate (ME-2,4cPP) into 1-hydroxy-2-methyl-2-(E)-butenyl 4-diphosphate. This Thermus thermophilus (strain ATCC BAA-163 / DSM 7039 / HB27) protein is 4-hydroxy-3-methylbut-2-en-1-yl diphosphate synthase (flavodoxin).